The sequence spans 96 residues: UPF0235 protein CAB243 (96 aa).

It belongs to the UPF0235 family.

The polypeptide is UPF0235 protein CAB243 (Chlamydia abortus (strain DSM 27085 / S26/3) (Chlamydophila abortus)).